The chain runs to 257 residues: Triosephosphate isomerase (257 aa).

2 residues coordinate substrate: asparagine 11 and lysine 13. The active-site Electrophile is the histidine 96. The Proton acceptor role is filled by glutamate 170.

The protein belongs to the triosephosphate isomerase family. Homodimer.

It localises to the cytoplasm. It carries out the reaction D-glyceraldehyde 3-phosphate = dihydroxyacetone phosphate. The enzyme catalyses dihydroxyacetone phosphate = methylglyoxal + phosphate. Its pathway is carbohydrate biosynthesis; gluconeogenesis. It functions in the pathway carbohydrate degradation; glycolysis; D-glyceraldehyde 3-phosphate from glycerone phosphate: step 1/1. In terms of biological role, triosephosphate isomerase is an extremely efficient metabolic enzyme that catalyzes the interconversion between dihydroxyacetone phosphate (DHAP) and D-glyceraldehyde-3-phosphate (G3P) in glycolysis and gluconeogenesis. It is also responsible for the non-negligible production of methylglyoxal a reactive cytotoxic side-product that modifies and can alter proteins, DNA and lipids. This Giardia intestinalis (Giardia lamblia) protein is Triosephosphate isomerase.